Reading from the N-terminus, the 205-residue chain is Methylthioribulose-1-phosphate dehydratase (205 aa).

Zn(2+) contacts are provided by His-94 and His-96.

Belongs to the aldolase class II family. MtnB subfamily. Zn(2+) serves as cofactor.

The enzyme catalyses 5-(methylsulfanyl)-D-ribulose 1-phosphate = 5-methylsulfanyl-2,3-dioxopentyl phosphate + H2O. It functions in the pathway amino-acid biosynthesis; L-methionine biosynthesis via salvage pathway; L-methionine from S-methyl-5-thio-alpha-D-ribose 1-phosphate: step 2/6. Its function is as follows. Catalyzes the dehydration of methylthioribulose-1-phosphate (MTRu-1-P) into 2,3-diketo-5-methylthiopentyl-1-phosphate (DK-MTP-1-P). The polypeptide is Methylthioribulose-1-phosphate dehydratase (Pectobacterium carotovorum subsp. carotovorum (strain PC1)).